Consider the following 132-residue polypeptide: MSVSDPLGDMLTRIRNAVGRKKTKVSTPASKLRARVLDVLQAEGYIRGYTQSEFENGKAEIEIELKYYEGVPVIREITRVSKPGRRVYVSVKSIPQVVNGLGISILSTPKGVMADHEAREQNVGGELLCRIF.

The protein belongs to the universal ribosomal protein uS8 family. Part of the 30S ribosomal subunit. Contacts proteins S5 and S12.

In terms of biological role, one of the primary rRNA binding proteins, it binds directly to 16S rRNA central domain where it helps coordinate assembly of the platform of the 30S subunit. This Brucella melitensis biotype 1 (strain ATCC 23456 / CCUG 17765 / NCTC 10094 / 16M) protein is Small ribosomal subunit protein uS8.